The primary structure comprises 696 residues: Glycine--tRNA ligase beta subunit (696 aa).

This sequence belongs to the class-II aminoacyl-tRNA synthetase family. Tetramer of two alpha and two beta subunits.

Its subcellular location is the cytoplasm. The catalysed reaction is tRNA(Gly) + glycine + ATP = glycyl-tRNA(Gly) + AMP + diphosphate. The polypeptide is Glycine--tRNA ligase beta subunit (Oleidesulfovibrio alaskensis (strain ATCC BAA-1058 / DSM 17464 / G20) (Desulfovibrio alaskensis)).